The following is a 424-amino-acid chain: Ubiquitin carboxyl-terminal hydrolase 12/46 homolog (424 aa).

Residues 24–421 enclose the USP domain; sequence FGLVNFGNTC…TGYILFYQSR (398 aa). Catalysis depends on cysteine 33, which acts as the Nucleophile. Residues 131 to 189 are disordered; the sequence is NAGPSNGNPKATNQGGSTSAMASSIASKSSSTSNSNSNSNSTTNSNGNSSNSTGSLNAN. Residues 133 to 144 show a composition bias toward polar residues; the sequence is GPSNGNPKATNQ. The span at 145-189 shows a compositional bias: low complexity; the sequence is GGSTSAMASSIASKSSSTSNSNSNSNSTTNSNGNSSNSTGSLNAN. Histidine 369 serves as the catalytic Proton acceptor.

The protein belongs to the peptidase C19 family. Catalytic component of the Usp12-46 deubiquitylase complex consisting of Usp12-46, Wdr20 and Uaf1. The Usp12-46 deubiquitylase complex associates with arr/arrow; the interaction leads to deubiquitination and stabilization of arr/arrow.

The enzyme catalyses Thiol-dependent hydrolysis of ester, thioester, amide, peptide and isopeptide bonds formed by the C-terminal Gly of ubiquitin (a 76-residue protein attached to proteins as an intracellular targeting signal).. Its function is as follows. Catalytic component of the Usp12-46 deubiquitylase complex. Deubiquitylates the wg/wingless-signaling receptor arr/arrow, which stabilizes the receptor and increases its concentration at the cell surface; this enhances the sensitivity of cells to wg/wingless-signal stimulation. This increases the amplitude and spatial range of the signaling response to the wg/wingless morphogen gradient, facilitating the precise, concentration-dependent regulation of its target genes. Required for wg/wingless-mediated signaling in the wing imaginal disc and for wg/wingless-dependent regulation of adult intestinal stem cell proliferation. Negative regulator of Notch signaling, possibly by regulating lysosomal degradation of N/Notch and affecting cell surface receptor levels; this may be context and cell-type specific function involved in external sensory organ development but not in wing imaginal-disc dorsoventral boundary signaling. Protects against HTT/huntingtin-induced polyglutamine expansion-dependent neurodegeneration. The chain is Ubiquitin carboxyl-terminal hydrolase 12/46 homolog from Drosophila melanogaster (Fruit fly).